A 473-amino-acid polypeptide reads, in one-letter code: Cysteine--tRNA ligase (473 aa).

Cysteine 28 provides a ligand contact to Zn(2+). Residues 30-40 carry the 'HIGH' region motif; it reads MTVYDYCHLGH. Residues cysteine 209, histidine 234, and glutamate 238 each contribute to the Zn(2+) site. The 'KMSKS' region motif lies at 282–286; the sequence is KMSKS. ATP is bound at residue lysine 285.

This sequence belongs to the class-I aminoacyl-tRNA synthetase family. Monomer. The cofactor is Zn(2+).

The protein localises to the cytoplasm. The catalysed reaction is tRNA(Cys) + L-cysteine + ATP = L-cysteinyl-tRNA(Cys) + AMP + diphosphate. The chain is Cysteine--tRNA ligase from Neisseria meningitidis serogroup B (strain ATCC BAA-335 / MC58).